A 235-amino-acid polypeptide reads, in one-letter code: Large ribosomal subunit protein uL1 (235 aa).

Belongs to the universal ribosomal protein uL1 family. Part of the 50S ribosomal subunit.

Its function is as follows. Binds directly to 23S rRNA. The L1 stalk is quite mobile in the ribosome, and is involved in E site tRNA release. Functionally, protein L1 is also a translational repressor protein, it controls the translation of the L11 operon by binding to its mRNA. This Desulfotalea psychrophila (strain LSv54 / DSM 12343) protein is Large ribosomal subunit protein uL1.